The chain runs to 412 residues: Isocitrate dehydrogenase [NADP] cytoplasmic (412 aa).

NADP(+) contacts are provided by residues 75-77 (TIT) and Arg82. Thr77 provides a ligand contact to substrate. Substrate-binding positions include 94-100 (SPNGTIR), Arg109, and Arg132. Mn(2+) is bound at residue Asp252. Lys260 provides a ligand contact to NADP(+). Position 275 (Asp275) interacts with Mn(2+). Residues 310-315 (GTVTRH) and Asn328 contribute to the NADP(+) site.

It belongs to the isocitrate and isopropylmalate dehydrogenases family. As to quaternary structure, homodimer. The cofactor is Mg(2+). Mn(2+) is required as a cofactor. In terms of processing, the N-terminus is blocked.

It is found in the cytoplasm. It carries out the reaction D-threo-isocitrate + NADP(+) = 2-oxoglutarate + CO2 + NADPH. With respect to regulation, by catabolite repression. Functionally, may function in the production of NADPH for fatty acid and sterol synthesis. In Saccharomyces cerevisiae (strain ATCC 204508 / S288c) (Baker's yeast), this protein is Isocitrate dehydrogenase [NADP] cytoplasmic (IDP2).